The following is a 505-amino-acid chain: ATP synthase subunit alpha (505 aa).

Position 169–176 (169–176) interacts with ATP; it reads GDRQIGKT.

It belongs to the ATPase alpha/beta chains family. In terms of assembly, F-type ATPases have 2 components, CF(1) - the catalytic core - and CF(0) - the membrane proton channel. CF(1) has five subunits: alpha(3), beta(3), gamma(1), delta(1), epsilon(1). CF(0) has three main subunits: a(1), b(2) and c(9-12). The alpha and beta chains form an alternating ring which encloses part of the gamma chain. CF(1) is attached to CF(0) by a central stalk formed by the gamma and epsilon chains, while a peripheral stalk is formed by the delta and b chains.

It localises to the cell inner membrane. The enzyme catalyses ATP + H2O + 4 H(+)(in) = ADP + phosphate + 5 H(+)(out). Its function is as follows. Produces ATP from ADP in the presence of a proton gradient across the membrane. The alpha chain is a regulatory subunit. This is ATP synthase subunit alpha from Desulfatibacillum aliphaticivorans.